The chain runs to 188 residues: Peptidyl-tRNA hydrolase (188 aa).

Position 15 (Tyr15) interacts with tRNA. His20 functions as the Proton acceptor in the catalytic mechanism. 3 residues coordinate tRNA: Phe63, Asn65, and Asn111.

Belongs to the PTH family. As to quaternary structure, monomer.

Its subcellular location is the cytoplasm. It carries out the reaction an N-acyl-L-alpha-aminoacyl-tRNA + H2O = an N-acyl-L-amino acid + a tRNA + H(+). In terms of biological role, hydrolyzes ribosome-free peptidyl-tRNAs (with 1 or more amino acids incorporated), which drop off the ribosome during protein synthesis, or as a result of ribosome stalling. Catalyzes the release of premature peptidyl moieties from peptidyl-tRNA molecules trapped in stalled 50S ribosomal subunits, and thus maintains levels of free tRNAs and 50S ribosomes. In Hydrogenobaculum sp. (strain Y04AAS1), this protein is Peptidyl-tRNA hydrolase.